We begin with the raw amino-acid sequence, 256 residues long: Imidazole glycerol phosphate synthase subunit HisF (256 aa).

Catalysis depends on residues aspartate 12 and aspartate 131.

It belongs to the HisA/HisF family. As to quaternary structure, heterodimer of HisH and HisF.

The protein resides in the cytoplasm. It carries out the reaction 5-[(5-phospho-1-deoxy-D-ribulos-1-ylimino)methylamino]-1-(5-phospho-beta-D-ribosyl)imidazole-4-carboxamide + L-glutamine = D-erythro-1-(imidazol-4-yl)glycerol 3-phosphate + 5-amino-1-(5-phospho-beta-D-ribosyl)imidazole-4-carboxamide + L-glutamate + H(+). It participates in amino-acid biosynthesis; L-histidine biosynthesis; L-histidine from 5-phospho-alpha-D-ribose 1-diphosphate: step 5/9. IGPS catalyzes the conversion of PRFAR and glutamine to IGP, AICAR and glutamate. The HisF subunit catalyzes the cyclization activity that produces IGP and AICAR from PRFAR using the ammonia provided by the HisH subunit. The sequence is that of Imidazole glycerol phosphate synthase subunit HisF from Pseudomonas fluorescens (strain SBW25).